Consider the following 209-residue polypeptide: Large ribosomal subunit protein uL3 (209 aa).

The interval 133–153 (THGNSLSHRVPGSIGQNQTPG) is disordered. Q150 bears the N5-methylglutamine mark.

The protein belongs to the universal ribosomal protein uL3 family. In terms of assembly, part of the 50S ribosomal subunit. Forms a cluster with proteins L14 and L19. Methylated by PrmB.

Functionally, one of the primary rRNA binding proteins, it binds directly near the 3'-end of the 23S rRNA, where it nucleates assembly of the 50S subunit. In Serratia proteamaculans (strain 568), this protein is Large ribosomal subunit protein uL3.